The primary structure comprises 251 residues: NADPH-dependent oxidoreductase (251 aa).

Belongs to the flavin oxidoreductase frp family. It depends on FMN as a cofactor.

Functionally, reduces FMN, organic nitro compounds and disulfide DTNB. Involved in maintenance of the cellular redox state and the disulfide stress response. This is NADPH-dependent oxidoreductase (nfrA) from Staphylococcus saprophyticus subsp. saprophyticus (strain ATCC 15305 / DSM 20229 / NCIMB 8711 / NCTC 7292 / S-41).